The primary structure comprises 1160 residues: Nonribosomal peptide synthetase fmqC (1160 aa).

Residues 132 to 520 (TYRELNDRSS…LGEVEHALQQ (389 aa)) form an adenylation region. The 78-residue stretch at 642–719 (QPVTQLEESL…EMAGMLDGVT (78 aa)) folds into the Carrier domain. An O-(pantetheine 4'-phosphoryl)serine modification is found at serine 679. Residues 749 to 1025 (CTLEDLQEGF…CAAAETPMRI (277 aa)) are condensation.

The protein belongs to the NRP synthetase family. In terms of assembly, interacts with the mitogen-activated protein kinase mpkA. Phosphorylated by mpkA during conidiogenesis.

It is found in the cytoplasm. It functions in the pathway alkaloid biosynthesis. Functionally, nonribosomal peptide synthetase; part of the gene cluster that mediates the biosynthesis of the antitumor fumiquinazolines that confer a dual-usage capability to defend against phagocytes in the environment and animal hosts. The simplest member is fumiquinazoline F (FQF) with a 6-6-6 tricyclic core derived from anthranilic acid (Ant), tryptophan (Trp), and alanine (Ala). The trimodular NRPS fmqA is responsible for FQF formation. Modules 1, 2 and 3 of fmqA are predicted to activate and load Ant, Trp and Ala, respectively, providing for the assembly of an Ant-Trp-Ala-S-enzyme intermediate that would undergo double cyclization for chain release and generation of the tricyclic 6-6-6 product fumiquinazoline F. The presence of an E domain predicted for module 2 of fmqA is consistent with epimerization of L-Trp to D-Trp during assembly to generate the R-stereocenter at C14 of FQF. The FAD-dependent monooxygenase fmqB and the monomodular NRPS fmqC then maturate FQF to FQA. FmqB oxidizes the 2',3'-double bond of the indole side chain of FQF, and fmqC activates L-Ala as the adenylate, installs it as the pantetheinyl thioester on its carrier protein domain, and acylates the oxidized indole for subsequent intramolecular cyclization to create the 6-5-5-imidazolindolone of FQA. The FAD-linked oxidoreductase fmqD introduces a third layer of scaffold complexity by converting FQA to the spirohemiaminal FQC, presumably by catalyzing the formation of a transient imine within the pyrazinone ring. FQC subsequently converts nonenzymatically to the known cyclic aminal FQD. This is Nonribosomal peptide synthetase fmqC from Aspergillus fumigatus (strain ATCC MYA-4609 / CBS 101355 / FGSC A1100 / Af293) (Neosartorya fumigata).